Reading from the N-terminus, the 467-residue chain is Zinc finger and BTB domain-containing protein 43 (467 aa).

N-acetylmethionine is present on Met-1. Residues 33 to 97 (CDVSIVVQGH…SYTGRLVMPA (65 aa)) form the BTB domain. Disordered regions lie at residues 134-153 (LNHG…GLVE) and 162-225 (HTDF…SAEF). 2 stretches are compositionally biased toward basic and acidic residues: residues 164 to 174 (DFPKAQELRDG) and 182 to 194 (KDEL…EHEY). Residues Lys-182, Lys-241, Lys-247, Lys-297, and Lys-358 each participate in a glycyl lysine isopeptide (Lys-Gly) (interchain with G-Cter in SUMO2) cross-link. A C2H2-type 1; atypical zinc finger spans residues 373 to 394 (YPCQCGKSFTHKSQRDRHMSMH). The C2H2-type 2 zinc finger occupies 400-422 (YGCGVCGKKFKMKHHLVGHMKIH). Thr-423 is modified (phosphothreonine). A C2H2-type 3; atypical zinc finger spans residues 428 to 450 (YECNICAKRFMWRDSFHRHVTSC). Lys-458 is covalently cross-linked (Glycyl lysine isopeptide (Lys-Gly) (interchain with G-Cter in SUMO2)).

It belongs to the krueppel C2H2-type zinc-finger protein family. In terms of assembly, interacts with BDP1.

The protein resides in the nucleus. May be involved in transcriptional regulation. The chain is Zinc finger and BTB domain-containing protein 43 (ZBTB43) from Homo sapiens (Human).